Reading from the N-terminus, the 129-residue chain is Lysozyme C, milk isozyme (129 aa).

A C-type lysozyme domain is found at 1 to 129 (KIFSKCELAR…LSKYLASCNL (129 aa)). Intrachain disulfides connect C6–C127, C30–C115, C65–C80, and C76–C94. Active-site residues include E35 and D53. Residues K82, D85, N87, D90, and D91 each coordinate Ca(2+).

The protein belongs to the glycosyl hydrolase 22 family. As to quaternary structure, monomer. The cofactor is Ca(2+).

The enzyme catalyses Hydrolysis of (1-&gt;4)-beta-linkages between N-acetylmuramic acid and N-acetyl-D-glucosamine residues in a peptidoglycan and between N-acetyl-D-glucosamine residues in chitodextrins.. Its function is as follows. Lysozymes have primarily a bacteriolytic function; those in tissues and body fluids are associated with the monocyte-macrophage system and enhance the activity of immunoagents. This chain is Lysozyme C, milk isozyme, found in Canis lupus familiaris (Dog).